The chain runs to 608 residues: Zinc metalloproteinase-disintegrin-like agkihagin (608 aa).

The first 20 residues, 1-20, serve as a signal peptide directing secretion; it reads MIQVLLVTICLAAFPYQGSS. A propeptide spanning residues 21-189 is cleaved from the precursor; the sequence is IILESGNVND…KKASQSNLTP (169 aa). The Peptidase M12B domain maps to 199 to 395; the sequence is KFVKLFLVAD…NMPQCILKKP (197 aa). 3 disulfide bridges follow: C310/C390, C350/C374, and C352/C357. H335 serves as a coordination point for Zn(2+). E336 is an active-site residue. Zn(2+) is bound by residues H339 and H345. A Disintegrin domain is found at 403–488; it reads PPVCGNYFVE…ADCTDRFQKN (86 aa). Positions 405, 408, 410, 412, 415, and 418 each coordinate Ca(2+). Cystine bridges form between C406/C435, C417/C430, C419/C425, C429/C452, C443/C449, C448/C474, C461/C481, C468/C499, C492/C504, C511/C561, C526/C570, C539/C549, C556/C596, and C590/C601. Positions 467–469 match the D/ECD-tripeptide motif; sequence ECD. Residues D469, M470, D472, D483, and R484 each contribute to the Ca(2+) site. N-linked (GlcNAc...) asparagine glycosylation occurs at N501.

Belongs to the venom metalloproteinase (M12B) family. P-III subfamily. P-IIIc sub-subfamily. In terms of assembly, homodimer; disulfide-linked. Zn(2+) is required as a cofactor. In terms of tissue distribution, expressed by the venom gland.

The protein localises to the secreted. Inhibited by EDTA and EGTA. Not inhibited by PMSF, antipain, pepstatin, and iodoacetamide. In terms of biological role, strongly inhibits the collagen-induced human platelet aggregation. Hydrolyzes the Aalpha-chain of fibrinogen (FGA), without cleavage of Bbeta- and gamma-chains. Induces apoptosis and strongly inhibits proliferation of endothelial cells as well as adhesion of the cells to extracellular matrix proteins. The polypeptide is Zinc metalloproteinase-disintegrin-like agkihagin (Deinagkistrodon acutus (Hundred-pace snake)).